The sequence spans 207 residues: ATP synthase subunit 5, mitochondrial (207 aa).

The protein belongs to the ATPase delta chain family. In terms of assembly, F-type ATPases have 2 components, CF(1) - the catalytic core - and CF(0) - the membrane proton channel. CF(1) has five subunits: alpha(3), beta(3), gamma(1), delta(1), epsilon(1). CF(0) has three main subunits: a, b and c.

Its subcellular location is the mitochondrion. The protein resides in the mitochondrion inner membrane. Mitochondrial membrane ATP synthase (F(1)F(0) ATP synthase or Complex V) produces ATP from ADP in the presence of a proton gradient across the membrane which is generated by electron transport complexes of the respiratory chain. F-type ATPases consist of two structural domains, F(1) - containing the extramembraneous catalytic core and F(0) - containing the membrane proton channel, linked together by a central stalk and a peripheral stalk. During catalysis, ATP synthesis in the catalytic domain of F(1) is coupled via a rotary mechanism of the central stalk subunits to proton translocation. Part of the complex F(0) domain and the peripheric stalk, which acts as a stator to hold the catalytic alpha(3)beta(3) subcomplex and subunit a/ATP6 static relative to the rotary elements. This Candida glabrata (strain ATCC 2001 / BCRC 20586 / JCM 3761 / NBRC 0622 / NRRL Y-65 / CBS 138) (Yeast) protein is ATP synthase subunit 5, mitochondrial (ATP5).